The sequence spans 635 residues: S-type anion channel SLAH3 (635 aa).

Residues 1–253 (MEEKPNYVIQ…IVLPNDKKWP (253 aa)) lie on the Cytoplasmic side of the membrane. Residues 102 to 121 (SDPTTSLSSENHKNSGSTGK) are compositionally biased toward polar residues. A disordered region spans residues 102–173 (SDPTTSLSSE…SGHHQNQNQA (72 aa)). Over residues 153 to 165 (NHHHHLHRQHQSG) the composition is skewed to basic residues. Serine 189 is subject to Phosphoserine. Residues 193–217 (ERQFTRKPASVEPEAPNRNNQNLNT) are disordered. The helical transmembrane segment at 254–276 (FLLRYPISTFGMCLGVSSQAIMW) threads the bilayer. Residues 277–299 (KTLATAEPTKFLHVPLWINQGLW) lie on the Extracellular side of the membrane. Residues 300 to 320 (FISVALILTIATIYLLKIILF) traverse the membrane as a helical segment. Over 321–335 (FEAVRREYYHPIRIN) the chain is Cytoplasmic. Residues 336 to 356 (FFFAPFISLLFLALGVPPSII) form a helical membrane-spanning segment. Residues 357–358 (TD) lie on the Extracellular side of the membrane. A helical membrane pass occupies residues 359–379 (LPHFLWYLLMFPFICLELKIY). Topologically, residues 380 to 396 (GQWMSGGQRRLSRVANP) are cytoplasmic. The helical transmembrane segment at 397–417 (TNHLSVVGNFVGALLGASMGL) threads the bilayer. The Extracellular segment spans residues 418–419 (RE). The chain crosses the membrane as a helical span at residues 420–440 (GPIFFYAVGMAHYLVLFVTLY). At 441-455 (QRLPTNETLPKDLHP) the chain is on the cytoplasmic side. The chain crosses the membrane as a helical span at residues 456–476 (VFFLFVAAPSVASMAWAKVTG). A topological domain (extracellular) is located at residue serine 477. Residues 478–498 (FDYGSKVCYFIAIFLYFSLAV) traverse the membrane as a helical segment. Residues 499-504 (RINFFR) lie on the Cytoplasmic side of the membrane. A helical transmembrane segment spans residues 505 to 525 (GIKFSLSWWAYTFPMTGAAIA). Residues 526 to 541 (TIRYATVVKSTMTQIM) lie on the Extracellular side of the membrane. Residues 542–562 (CVVLCAIATLVVFALLVTTII) traverse the membrane as a helical segment. Residues 563–635 (HAFVLRDLFP…NGKTQESDSS (73 aa)) lie on the Cytoplasmic side of the membrane. The tract at residues 611–635 (FTDSDSSQSNDVEACNGKTQESDSS) is disordered. Over residues 614-635 (SDSSQSNDVEACNGKTQESDSS) the composition is skewed to polar residues.

It belongs to the SLAC1 S-type anion channel family. In terms of assembly, homotrimer. Interacts with KAT1. Expressed in the whole plant, escpecially in vascular systems.

It localises to the cell membrane. Functionally, slow, weak voltage-dependent S-type anion efflux channel involved in maintenance of anion homeostasis. Binds to the highly selective inward-rectifying potassium channel KAT1 and inhibits its activity. Functions as an essential negative regulator of inward potassium channels in guard cells. Essential for the efficient stomatal closure and opening in guard cells. The chain is S-type anion channel SLAH3 (SLAH3) from Arabidopsis thaliana (Mouse-ear cress).